Here is a 428-residue protein sequence, read N- to C-terminus: Maltoporin (428 aa).

Residues 1–24 (MTTLRKLPIALAVAAGVLSTQAMA) form the signal peptide.

Belongs to the porin LamB (TC 1.B.3) family. As to quaternary structure, homotrimer formed of three 18-stranded antiparallel beta-barrels, containing three independent channels.

The protein localises to the cell outer membrane. It catalyses the reaction beta-maltose(in) = beta-maltose(out). In terms of biological role, involved in the transport of maltose and maltodextrins. This chain is Maltoporin, found in Yersinia enterocolitica serotype O:8 / biotype 1B (strain NCTC 13174 / 8081).